We begin with the raw amino-acid sequence, 766 residues long: MGQKRQRGSKSADLQAKKRKKDVSAVEDGEDALVTVNDLNWKEVALPDRLEDAGGFFGLEEIDGVEVIKGGSEGLRFKAAHGKPKKSILKKKAPEEEEPKFDDDEWSGFSDNEVTEKKDTAPKEDQKDEQEADKPTAEEKKKAKKDRQAEQKKAKKEAKQKTTPNQEDKSIKPGLSFAALQDEEDDDGVDVSAWESLGLSPEILTSLSKMKFTTPTLVQKSCIPQILDGHDVIGKASTGSGKTLAFGIPILEHYLEKRRQDLRAGKEEKKKDTAPIALIMSPTRELAHQLAKHIGELALHAPGSNARIALLTGGLSVQKQQRVLAGADIVIGTPGRVWEVLSSGQGLIRKMSEIKFLVIDEADRLLSEGHFKEAEEILGALDRVEEGNFGGEESEDEEKEDARSERQTLVFSATFHRDLQQKLAGKARWTGGDIMSNKESMEYLLQKLKFREEKPKFIDVNPVSQMAEGLKEGIVECGAMEKDLYLYTLLLYNPKHRTLVFTNSISAVRRLTQLLQNLGLPALALHSSMAQKARLRSVERFSSPTSDPSSILVATDVAARGLDIKGIDFVIHYHAPRAADTYVHRSGRTARAGASGKSVIICAPEEMVGVVRLAAKVHANMANGKKLPLESLELDRRVVLRVRQRVDLAAKITDSNIAKEKISAEDNWLQKAAEDLGVEYDSEEFESAQGRGRGRGRGRQERQRKAGEVTKNELAAMRAELKHLLSQRVNVGVSERYLTSGRVDIEALLRGEGNNSFLGQVDPLDF.

Disordered regions lie at residues 1-28 (MGQK…AVED) and 75-173 (LRFK…SIKP). Basic residues predominate over residues 78–91 (KAAHGKPKKSILKK). Over residues 95 to 106 (EEEEPKFDDDEW) the composition is skewed to acidic residues. Composition is skewed to basic and acidic residues over residues 114 to 126 (VTEK…KEDQ) and 132 to 171 (ADKP…DKSI). The short motif at 192-220 (SAWESLGLSPEILTSLSKMKFTTPTLVQK) is the Q motif element. A Helicase ATP-binding domain is found at 223 to 433 (IPQILDGHDV…AGKARWTGGD (211 aa)). 236–243 (ASTGSGKT) serves as a coordination point for ATP. The short motif at 360–363 (DEAD) is the DEAD box element. A Helicase C-terminal domain is found at 485–635 (YLYTLLLYNP…KLPLESLELD (151 aa)). The segment at 683–711 (EEFESAQGRGRGRGRGRQERQRKAGEVTK) is disordered. A compositionally biased stretch (basic and acidic residues) spans 698–711 (GRQERQRKAGEVTK).

It belongs to the DEAD box helicase family. DDX24/MAK5 subfamily.

It is found in the nucleus. It localises to the nucleolus. It carries out the reaction ATP + H2O = ADP + phosphate + H(+). ATP-binding RNA helicase involved in the biogenesis of 60S ribosomal subunits and is required for the normal formation of 25S and 5.8S rRNAs. The sequence is that of ATP-dependent RNA helicase mak5 (mak5) from Aspergillus niger (strain ATCC MYA-4892 / CBS 513.88 / FGSC A1513).